The chain runs to 782 residues: DNA repair and recombination protein RAD54-like (782 aa).

Polar residues predominate over residues 1 to 20 (MRRSLAPSQRGGQRLSSRND). Residues 1 to 28 (MRRSLAPSQRGGQRLSSRNDFTPPLLKK) form a disordered region. The interval 2–9 (RRSLAPSQ) is required for chromatin remodeling, strand pairing activities and coupling of ATPase activity. Threonine 22 bears the Phosphothreonine mark. The 176-residue stretch at 168–343 (EGKRGNFNGC…FSLVNFVNPE (176 aa)) folds into the Helicase ATP-binding domain. Residue 181-188 (DEMGLGKT) coordinates ATP. Residues 294–297 (DEGH) carry the DEGH box motif. Positions 501 to 658 (LLDFMLAAIR…NNESAEKHFT (158 aa)) constitute a Helicase C-terminal domain. Polar residues predominate over residues 741–753 (SQKIETTPATETS). Residues 741–782 (SQKIETTPATETSVEAKPEPERRKRPAMPLSDDSADEDFQGF) form a disordered region. Acidic residues predominate over residues 773 to 782 (DSADEDFQGF).

This sequence belongs to the SNF2/RAD54 helicase family. As to quaternary structure, interacts (via N-terminus) with spn-A/Rad51.

It is found in the nucleus. Involved in mitotic DNA repair and meiotic recombination. Functions in the recombinational DNA repair pathway. Essential for interhomolog gene conversion (GC), but may have a less important role in intersister GC than spn-A/Rad51. In the presence of DNA, spn-A/Rad51 enhances the ATPase activity of okr/Rad54. The sequence is that of DNA repair and recombination protein RAD54-like from Drosophila pseudoobscura pseudoobscura (Fruit fly).